We begin with the raw amino-acid sequence, 57 residues long: MAVPKRRMSRANTRSRRAQWKAEATGLVSVTVAGQPRKVPRRLLKAARLGLVDLDRR.

This sequence belongs to the bacterial ribosomal protein bL32 family.

The sequence is that of Large ribosomal subunit protein bL32 from Mycolicibacterium gilvum (strain PYR-GCK) (Mycobacterium gilvum (strain PYR-GCK)).